The chain runs to 231 residues: Large ribosomal subunit protein uL1 (231 aa).

This sequence belongs to the universal ribosomal protein uL1 family. In terms of assembly, part of the 50S ribosomal subunit.

In terms of biological role, binds directly to 23S rRNA. The L1 stalk is quite mobile in the ribosome, and is involved in E site tRNA release. Its function is as follows. Protein L1 is also a translational repressor protein, it controls the translation of the L11 operon by binding to its mRNA. This is Large ribosomal subunit protein uL1 from Alkalilimnicola ehrlichii (strain ATCC BAA-1101 / DSM 17681 / MLHE-1).